We begin with the raw amino-acid sequence, 60 residues long: Putative transmembrane protein 74 (60 aa).

A run of 2 helical transmembrane segments spans residues 4–24 (FSVIMYLINSVIFTFMIFLTF) and 35–55 (WVYILIGFFTAIVFHSGYQAG).

It is found in the host membrane. In Sulfolobus islandicus filamentous virus (isolate Iceland/Hveragerdi) (SIFV), this protein is Putative transmembrane protein 74 (SIFV0074).